We begin with the raw amino-acid sequence, 365 residues long: Phospho-N-acetylmuramoyl-pentapeptide-transferase (365 aa).

The next 9 helical transmembrane spans lie at 19 to 39 (LLIL…WLLT), 47 to 67 (AVIL…FGVI), 91 to 111 (AGTP…VALI), 115 to 135 (FDPQ…IGWV), 155 to 175 (LLLQ…TGSP), 184 to 204 (GNLI…VLVA), 224 to 244 (AIAF…LMIF), 281 to 301 (AVGL…IFFV), and 344 to 364 (TQIV…GFIS).

Belongs to the glycosyltransferase 4 family. MraY subfamily. The cofactor is Mg(2+).

It localises to the cell inner membrane. The enzyme catalyses UDP-N-acetyl-alpha-D-muramoyl-L-alanyl-gamma-D-glutamyl-meso-2,6-diaminopimeloyl-D-alanyl-D-alanine + di-trans,octa-cis-undecaprenyl phosphate = di-trans,octa-cis-undecaprenyl diphospho-N-acetyl-alpha-D-muramoyl-L-alanyl-D-glutamyl-meso-2,6-diaminopimeloyl-D-alanyl-D-alanine + UMP. It functions in the pathway cell wall biogenesis; peptidoglycan biosynthesis. Catalyzes the initial step of the lipid cycle reactions in the biosynthesis of the cell wall peptidoglycan: transfers peptidoglycan precursor phospho-MurNAc-pentapeptide from UDP-MurNAc-pentapeptide onto the lipid carrier undecaprenyl phosphate, yielding undecaprenyl-pyrophosphoryl-MurNAc-pentapeptide, known as lipid I. This is Phospho-N-acetylmuramoyl-pentapeptide-transferase from Gloeothece citriformis (strain PCC 7424) (Cyanothece sp. (strain PCC 7424)).